A 339-amino-acid polypeptide reads, in one-letter code: Annexin A2 (339 aa).

Ser2 bears the N-acetylserine mark. Positions 2 to 24 (STVHEILCKLSLEGDHSTPPSAY) are S100A10-binding site. Tyr24 is modified (phosphotyrosine; by SRC). A Phosphoserine; by PKC modification is found at Ser26. Annexin repeat units follow at residues 33 to 104 (FDAE…GLLK) and 105 to 176 (TPAQ…ALAK). Lys49 carries the post-translational modification N6-acetyllysine; alternate. A Glycyl lysine isopeptide (Lys-Gly) (interchain with G-Cter in SUMO1); alternate cross-link involves residue Lys49. Lys49 is covalently cross-linked (Glycyl lysine isopeptide (Lys-Gly) (interchain with G-Cter in SUMO2); alternate). Lys152 carries the post-translational modification N6-acetyllysine. Ser184 bears the Phosphoserine mark. Annexin repeat units follow at residues 189-261 (ELID…NLVQ) and 265-336 (NKPL…YLCG). Tyr199 carries the phosphotyrosine modification. At Lys227 the chain carries N6-acetyllysine.

Belongs to the annexin family. As to quaternary structure, heterotetramer containing 2 light chains of S100A10/p11 and 2 heavy chains of ANXA2/p36. Interacts with ATP1B1. Interacts with DYSF. Interacts with COCH. Interacts (via repeat Annexin 1) with PCSK9 (via the C-terminal domain); the interaction inhibits the degradation of LDLR. Interacts with CEACAM1 (via the cytoplasmic domain); this interaction is regulated by phosphorylation of CEACAM1. Interacts with APPL2 and APPL1; targets APPL2 to endosomes and acting in parallel to RAB5A. Interacts with S100A4. May interact with UBAP2. Interacts with PLEKHG4B; this interaction is required for PLEKHG4B localization to cell-cell adhesions. Interacts with FAM13A. Interacts with salivary cystatin-L2 (via loop 2) from the tick Ixodes scapularis; the interaction results in reduced activation of mouse NLRC4 inflammasome formation upon Anaplasma phagocytophilum infection. ISGylated.

It is found in the secreted. The protein localises to the extracellular space. Its subcellular location is the extracellular matrix. It localises to the basement membrane. The protein resides in the melanosome. It is found in the early endosome. In terms of biological role, calcium-regulated membrane-binding protein whose affinity for calcium is greatly enhanced by anionic phospholipids. It binds two calcium ions with high affinity. May be involved in heat-stress response. Inhibits PCSK9-enhanced LDLR degradation, probably reduces PCSK9 protein levels via a translational mechanism but also competes with LDLR for binding with PCSK9. Binds to endosomes damaged by phagocytosis of particulate wear debris and participates in endosomal membrane stabilization, thereby limiting NLRP3 inflammasome activation. Required for endothelial cell surface plasmin generation and may support fibrinolytic surveillance and neoangiogenesis. Its function is as follows. (Microbial infection) Regulates the formation of the NLRC4 inflammasome triggered by Anaplasma phagocytophilum infection. Functionally, (Microbial infection) Protects against Klebsiella pneumoniae infection. Attenuates bacteria-induced pulmonary inflammation and promotes intro-abdominal pathogen clearance. Promotes anti-inflammatory responses by facilitating TLR4 internalization and translocation into early endosomal membranes; this leads to activation of TRAM-dependent endosomal signaling and release of anti-inflammatory cytokines. (Microbial infection) Promotes macrophage phagocytic efficiency towards Cryptococcus neoformans and ability to control fungal infection inside the cells. In terms of biological role, (Microbial infection) Contributes to protection against Pseudomonas aeruginosa infection by regulating autophagy via the AKT1-mTOR-ULK1/2 signaling pathway and activation of Rho GTPases via FAM13A-mediated mechanism. In Mus musculus (Mouse), this protein is Annexin A2 (Anxa2).